The primary structure comprises 282 residues: uncharacterized protein (282 aa).

It to M.tuberculosis Rv2161c and Rv3079c.

This is an uncharacterized protein from Mycobacterium tuberculosis (strain CDC 1551 / Oshkosh).